The chain runs to 1404 residues: Probable GPI-anchored adhesin-like protein PGA55 (1404 aa).

An N-terminal signal peptide occupies residues 1-19 (MVLLCKYKVSWVFVLSVAG). 87 tandem repeats follow at residues 104-109 (VSSSSS), 136-141 (VSSSSE), 156-161 (VSSSSK), 162-167 (VSSSSE), 183-188 (VSSSSQ), 196-201 (VSSSSE), 203-208 (VSSSSE), 209-214 (VSSSSE), 216-221 (VSSSSE), 222-227 (VSSSSE), 228-233 (VSSSSE), 234-239 (VSSSSQ), 247-252 (VSSSSE), 253-258 (VSSSSS), 261-266 (VSSSSE), 267-272 (VSSSSE), 274-279 (VSSSSE), 280-285 (VSSSSE), 286-291 (VSSSSE), 292-297 (VSSSSE), 298-303 (VSSSSE), 304-309 (VSSSSQ), 317-322 (VSSSSE), 324-329 (VSSSSE), 330-335 (VSSSSE), 336-341 (VSSSSE), 343-348 (VSSSSE), 349-354 (VSSSSE), 355-360 (VSSSSE), 361-366 (VSSSSQ), 374-379 (VSSSSE), 380-385 (VSSSSS), 388-393 (VSSSSE), 394-399 (VSSSSE), 401-406 (VSSSSE), 407-412 (VSSSSE), 413-418 (VSSSSE), 419-424 (VSSSSE), 425-430 (VSSSSE), 431-436 (VSSSSQ), 444-449 (VSSSSE), 450-455 (VSSSSE), 457-462 (VSSSSE), 463-468 (VSSSSE), 469-474 (VSSSSE), 475-480 (VSSSSQ), 488-493 (VSSSSE), 494-500 (VSSSSSE), 502-507 (VSSSSE), 508-513 (VSSSSE), 515-520 (VSSSSE), 521-526 (VSSSSE), 527-532 (VSSSSE), 533-538 (VSSSSQ), 546-551 (VSSSSE), 552-557 (VSSSSS), 560-565 (VSSSSE), 566-571 (VSSSSE), 573-578 (VSSSSE), 579-584 (VSSSSE), 585-590 (VSSSSE), 591-596 (VSSSSQ), 604-609 (VSSSSE), 611-616 (VSSSSE), 617-622 (VSSSSE), 623-628 (VSSSSE), 629-634 (VSSSSE), 635-640 (VSSSSE), 641-646 (VSSSSQ), 654-659 (VSSSSE), 660-665 (VSSSSS), 668-673 (VSSSSE), 674-679 (VSSSSE), 681-686 (VSSSSE), 687-692 (VSSSSE), 693-698 (VSSSSE), 699-704 (VSSSSQ), 712-717 (VSSSSE), 719-724 (VSSSSE), 725-730 (VSSSSE), 731-736 (VSSSSE), 737-742 (VSSSSE), 743-748 (VSSSSE), 749-754 (VSSSSE), 771-776 (VTSSSE), 777-782 (VSSSSQ), and 797-802 (VSSSSE). The interval 104 to 541 (VSSSSSEVIS…EVSSSSQVTS (438 aa)) is 88 X 6 AA approximate tandem repeats. Residues 113-833 (SSSSEEASSS…VSSSSASSEV (721 aa)) form a disordered region. Residue Asn817 is glycosylated (N-linked (GlcNAc...) asparagine). The stretch at 824 to 829 (VSSSSA) is one 1-88 repeat. Residues Asn994 and Asn1074 are each glycosylated (N-linked (GlcNAc...) asparagine). Asn1382 carries the GPI-anchor amidated asparagine lipid modification. Positions 1383–1404 (AASRQSFNYKFIVGLILAYIIA) are cleaved as a propeptide — removed in mature form.

The protein localises to the cell membrane. In terms of biological role, predicted GPI-anchored adhesin-like protein which may be involved in filamentous growth and chlamydospore formation. The sequence is that of Probable GPI-anchored adhesin-like protein PGA55 (PGA55) from Candida albicans (strain SC5314 / ATCC MYA-2876) (Yeast).